Consider the following 467-residue polypeptide: F-box/kelch-repeat protein SKIP11 (467 aa).

The interval 77-117 (LSGGEEQADAAIGDGSSSRQEQEQQSDFNDNGGDSSDSHSL) is disordered. Low complexity predominate over residues 92 to 111 (SSSRQEQEQQSDFNDNGGDS). The F-box domain occupies 116–163 (SLINEIGRDNSIDCLIRCSRSDYGSIASLNRNFRSLVKSGEIYRLRRQ). 5 Kelch repeats span residues 159–210 (RLRR…KESL), 215–259 (DLLV…SLGE), 261–307 (AIFA…FMDG), 308–356 (KFYV…DMSP), and 365–411 (AVVN…GLAF).

Part of a SCF (ASK-cullin-F-box) protein ligase complex. Interacts with SKP1A/ASK1 and SPK1B/ASK2.

The protein resides in the nucleus. Its pathway is protein modification; protein ubiquitination. Component of SCF(ASK-cullin-F-box) E3 ubiquitin ligase complexes, which may mediate the ubiquitination and subsequent proteasomal degradation of target proteins. The chain is F-box/kelch-repeat protein SKIP11 (SKIP11) from Arabidopsis thaliana (Mouse-ear cress).